The sequence spans 569 residues: MNITSLQQNITRSWQIPFTNSSDSIVTVGDRNLTIDEVVNVARHGTQVRLTDNADVIRGVQASCDYINNAVETAQPIYGVTSGFGGMADVVISREQAAELQTNLIWFLKSGAGNKLSLADVRAAMLLRANSHLYGASGIRLELIQRIETFLNAGVTPHVYEFGSIGASGDLVPLSYITGALIGLDPSFTVDFDGKEMDAVTALSRLGLPKLQLQPKEGLAMMNGTSVMTGIAANCVYDAKVLLALTMGVHALAIQGLYGTNQSFHPFIHQCKPHPGQLWTADQMFSLLKDSSLVREELDGKHEYRGKDLIQDRYSLRCLAQFIGPIVDGVSEITKQIEVEMNSVTDNPLIDVENQVSYHGGNFLGQYVGVTMDRLRYYIGLLAKHIDVQIALLVSPEFSNGLPPSLVGNSDRKVNMGLKGLQISGNSIMPLLSFYGNSLADRFPTHAEQFNQNINSQGYISANLTRRSVDIFQNYMAIALMFGVQAVDLRTYKMKGHYDARTCLSPNTVQLYTAVCEVVGKPLTSVRPYIWNDNEQCLDEHIARISADIAGGGLIVQAVEHIFSSLKST.

Tyr78 functions as the Proton donor/acceptor in the catalytic mechanism. A cross-link (5-imidazolinone (Ala-Gly)) is located at residues 167-169 (ASG). Ser168 is subject to 2,3-didehydroalanine (Ser). Residues Asn223, Gln311, Arg317, Asn347, Lys419, Glu448, and Asn451 each coordinate (E)-cinnamate.

Belongs to the PAL/histidase family. As to quaternary structure, homotetramer. Post-translationally, contains an active site 4-methylidene-imidazol-5-one (MIO), which is formed autocatalytically by cyclization and dehydration of residues Ala-Ser-Gly.

Its subcellular location is the cytoplasm. It catalyses the reaction L-phenylalanine = (E)-cinnamate + NH4(+). Its pathway is phenylpropanoid metabolism; trans-cinnamate biosynthesis; trans-cinnamate from L-phenylalanine: step 1/1. Its function is as follows. Catalyzes the non-oxidative deamination of L-phenylalanine to form trans-cinnamic acid, the first step in the phenylpropanoid pathway. The chain is Phenylalanine ammonia-lyase from Nostoc punctiforme (strain ATCC 29133 / PCC 73102).